The chain runs to 544 residues: Methionine--tRNA ligase (544 aa).

Residues 10-20 (PYANGSLHLGH) carry the 'HIGH' region motif. Residues Cys-141, Cys-144, Cys-153, and Cys-156 each coordinate Zn(2+). A 'KMSKS' region motif is present at residues 329–333 (KLSTS). An ATP-binding site is contributed by Thr-332.

The protein belongs to the class-I aminoacyl-tRNA synthetase family. MetG type 1 subfamily. Monomer. Zn(2+) is required as a cofactor.

It localises to the cytoplasm. It carries out the reaction tRNA(Met) + L-methionine + ATP = L-methionyl-tRNA(Met) + AMP + diphosphate. In terms of biological role, is required not only for elongation of protein synthesis but also for the initiation of all mRNA translation through initiator tRNA(fMet) aminoacylation. This Bacillus cereus (strain G9842) protein is Methionine--tRNA ligase.